Reading from the N-terminus, the 157-residue chain is Crossover junction endodeoxyribonuclease RuvC (157 aa).

Catalysis depends on residues Asp7, Glu66, and Asp139. Asp7, Glu66, and Asp139 together coordinate Mg(2+).

This sequence belongs to the RuvC family. As to quaternary structure, homodimer which binds Holliday junction (HJ) DNA. The HJ becomes 2-fold symmetrical on binding to RuvC with unstacked arms; it has a different conformation from HJ DNA in complex with RuvA. In the full resolvosome a probable DNA-RuvA(4)-RuvB(12)-RuvC(2) complex forms which resolves the HJ. The cofactor is Mg(2+).

It localises to the cytoplasm. It catalyses the reaction Endonucleolytic cleavage at a junction such as a reciprocal single-stranded crossover between two homologous DNA duplexes (Holliday junction).. Functionally, the RuvA-RuvB-RuvC complex processes Holliday junction (HJ) DNA during genetic recombination and DNA repair. Endonuclease that resolves HJ intermediates. Cleaves cruciform DNA by making single-stranded nicks across the HJ at symmetrical positions within the homologous arms, yielding a 5'-phosphate and a 3'-hydroxyl group; requires a central core of homology in the junction. The consensus cleavage sequence is 5'-(A/T)TT(C/G)-3'. Cleavage occurs on the 3'-side of the TT dinucleotide at the point of strand exchange. HJ branch migration catalyzed by RuvA-RuvB allows RuvC to scan DNA until it finds its consensus sequence, where it cleaves and resolves the cruciform DNA. The protein is Crossover junction endodeoxyribonuclease RuvC of Helicobacter pylori (strain ATCC 700392 / 26695) (Campylobacter pylori).